Here is a 262-residue protein sequence, read N- to C-terminus: Small ribosomal subunit protein uS2 (262 aa).

Residues 228-262 (VSNEEVAAEQNIDLDESKEATEAETTEENTSVESN) form a disordered region.

It belongs to the universal ribosomal protein uS2 family.

This Staphylococcus saprophyticus subsp. saprophyticus (strain ATCC 15305 / DSM 20229 / NCIMB 8711 / NCTC 7292 / S-41) protein is Small ribosomal subunit protein uS2.